Consider the following 552-residue polypeptide: N-acetylglucosamine-6-sulfatase (552 aa).

The signal sequence occupies residues 1–36; that stretch reads MRLLPLAPGRLRRGSPRHLPSCSPALLLLVLGGCLG. Ca(2+) is bound by residues Asp55, Asp56, and Cys91. Cys91 serves as the catalytic Nucleophile. Position 91 is a 3-oxoalanine (Cys) (Cys91). Asn111, Asn117, Asn183, Asn198, Asn210, Asn279, and Asn317 each carry an N-linked (GlcNAc...) asparagine glycan. Positions 326 and 327 each coordinate Ca(2+). N-linked (GlcNAc...) asparagine glycans are attached at residues Asn362, Asn387, Asn405, Asn422, Asn449, and Asn480. Ser541 is subject to Phosphoserine.

It belongs to the sulfatase family. Ca(2+) is required as a cofactor. The form A (78 kDa) is processed by internal peptidase cleavage to a 32 kDa N-terminal species (form B) and a 48 kDa C-terminal species. Post-translationally, the conversion to 3-oxoalanine (also known as C-formylglycine, FGly), of a serine or cysteine residue in prokaryotes and of a cysteine residue in eukaryotes, is critical for catalytic activity.

It localises to the lysosome. It catalyses the reaction Hydrolysis of the 6-sulfate groups of the N-acetyl-D-glucosamine 6-sulfate units of heparan sulfate and keratan sulfate.. Functionally, hydrolyzes 6-sulfate groups in N-acetyl-d-glucosaminide units of heparin sulfate and keratan sulfate. The sequence is that of N-acetylglucosamine-6-sulfatase (GNS) from Homo sapiens (Human).